The sequence spans 224 residues: TM2 domain-containing protein amaretto (224 aa).

Residues 1–18 (MRIFYGLLAFLVARQHDA) form the signal peptide. Residues 19-154 (QAIQARSDKE…FLRAGVPCVR (136 aa)) are Extracellular-facing. Asn102 and Asn142 each carry an N-linked (GlcNAc...) asparagine glycan. The chain crosses the membrane as a helical span at residues 155–175 (YTDHYFVTTLIYSMLLGFLGM). Positions 157–205 (DHYFVTTLIYSMLLGFLGMDRFCLGQTGTAVGKLLTMGGVGVWWIIDVI) constitute a TM2 domain. Residues 176 to 189 (DRFCLGQTGTAVGK) lie on the Cytoplasmic side of the membrane. The chain crosses the membrane as a helical span at residues 190-210 (LLTMGGVGVWWIIDVILLITN). Topologically, residues 211–224 (NLLPEDGSNWNPYV) are extracellular.

The protein belongs to the TM2 family.

The protein resides in the membrane. Positive regulator of Notch signaling. Maternal neurogenic factor involved in Notch signaling-dependent neuroectodermal specification during early embryogenesis. Functions cooperatively with amx/TM2D3 and bisc/TM2D1. The sequence is that of TM2 domain-containing protein amaretto from Drosophila melanogaster (Fruit fly).